The primary structure comprises 257 residues: UPF0246 protein SO_3540 (257 aa).

Belongs to the UPF0246 family.

This chain is UPF0246 protein SO_3540, found in Shewanella oneidensis (strain ATCC 700550 / JCM 31522 / CIP 106686 / LMG 19005 / NCIMB 14063 / MR-1).